The chain runs to 163 residues: Norbelladine synthase (163 aa).

68 to 71 lines the tyramine pocket; sequence YHKE. Lys83 functions as the Proton donor in the catalytic mechanism.

Belongs to the BetVI family. Mostly expressed in bulbs, and, to a lower extent, in roots, stems, leaves and flowers.

It catalyses the reaction 3,4-dihydroxybenzaldehyde + tyramine + AH2 = norbelladine + A + H2O. Its pathway is alkaloid biosynthesis. In terms of biological role, catalyzes the condensation of tyramine and 3,4-dihydroxybenzaldehyde (3,4-DHBA) to form norbelladine, the common precursor to all Amaryllidaceae alkaloids such as galanthamine, lycorine and haemanthamine, and including haemanthamine- and crinamine-type alkaloids, promising anticancer agents. The protein is Norbelladine synthase of Narcissus pseudonarcissus (Daffodil).